The chain runs to 788 residues: Spastin (788 aa).

The tract at residues 1-105 (MVRTKNQSSS…PRSAGGPSSV (105 aa)) is disordered. The Cytoplasmic segment spans residues 1–116 (MVRTKNQSSS…KQNLYVVSFP (116 aa)). Residues 1-227 (MVRTKNQSSS…NRSGSGYSPG (227 aa)) are required for localization to punctate cytoplasmic foci. Composition is skewed to low complexity over residues 8–48 (SSSS…SSHR) and 57–75 (ATNVSSSSNRRTTPGSSPD). Residues 117-137 (IIFLFNVLRSLIYQLFCIFRY) constitute an intramembrane region (helical). Topologically, residues 138–788 (LYGASTKVIY…WSSDYGDITI (651 aa)) are cytoplasmic. Residues 227-788 (GPGDPLLAKQ…WSSDYGDITI (562 aa)) form a sufficient for interaction with microtubules and microtubule severing region. An MIT domain is found at 240 to 315 (HRRAFEYISK…SMARDRLHFL (76 aa)). The span at 331-353 (EKQKANESREQQQKPQKAREAAD) shows a compositional bias: basic and acidic residues. Residues 331-484 (EKQKANESRE…SGSGSGASTP (154 aa)) form a disordered region. Positions 387-400 (ATATTPTSSSSLAS) are enriched in low complexity. Polar residues-rich tracts occupy residues 419 to 433 (NKSQTLPRNLGSKTS) and 453 to 469 (QFSSGRNTPPQRSRTPI). The interval 471–485 (NNGASGSGSGASTPV) is required for interaction with microtubules. An ATP-binding site is contributed by 553 to 560 (GPPGNGKT).

The protein belongs to the AAA ATPase family. Spastin subfamily. As to quaternary structure, homohexamer. The homohexamer is stabilized by ATP-binding. The homohexamer may adopt a ring conformation through which microtubules pass prior to being severed. Interacts with microtubules. Interacts with atl; may be involved in microtubule dynamics.

The protein localises to the membrane. Its subcellular location is the cytoplasm. The protein resides in the cytoskeleton. It localises to the microtubule organizing center. It is found in the centrosome. The protein localises to the chromosome. Its subcellular location is the lipid droplet. The catalysed reaction is n ATP + n H2O + a microtubule = n ADP + n phosphate + (n+1) alpha/beta tubulin heterodimers.. Functionally, ATP-dependent microtubule severing protein. Stimulates microtubule minus-end depolymerization and poleward microtubule flux in the mitotic spindle. Regulates microtubule stability in the neuromuscular junction synapse. Involved in lipid metabolism by regulating the size and distribution of lipid droplets. Involved in axon regeneration by regulating microtubule severing. This is Spastin from Drosophila persimilis (Fruit fly).